The sequence spans 183 residues: Holliday junction branch migration complex subunit RuvA (183 aa).

The tract at residues 1-63 is domain I; the sequence is MTVGLIGVVE…EDAHLLYGFL (63 aa). Positions 64–141 are domain II; the sequence is EESEKILFER…IQDETKPVHN (78 aa). Position 141 (N141) is a region of interest, flexible linker. A domain III region spans residues 141 to 183; the sequence is NEAFLALESLGFKSAEINPILKKLKPNLSVEEAIKEALQQLRS.

Belongs to the RuvA family. In terms of assembly, homotetramer. Forms an RuvA(8)-RuvB(12)-Holliday junction (HJ) complex. HJ DNA is sandwiched between 2 RuvA tetramers; dsDNA enters through RuvA and exits via RuvB. An RuvB hexamer assembles on each DNA strand where it exits the tetramer. Each RuvB hexamer is contacted by two RuvA subunits (via domain III) on 2 adjacent RuvB subunits; this complex drives branch migration. In the full resolvosome a probable DNA-RuvA(4)-RuvB(12)-RuvC(2) complex forms which resolves the HJ.

Its subcellular location is the cytoplasm. Functionally, the RuvA-RuvB-RuvC complex processes Holliday junction (HJ) DNA during genetic recombination and DNA repair, while the RuvA-RuvB complex plays an important role in the rescue of blocked DNA replication forks via replication fork reversal (RFR). RuvA specifically binds to HJ cruciform DNA, conferring on it an open structure. The RuvB hexamer acts as an ATP-dependent pump, pulling dsDNA into and through the RuvAB complex. HJ branch migration allows RuvC to scan DNA until it finds its consensus sequence, where it cleaves and resolves the cruciform DNA. The sequence is that of Holliday junction branch migration complex subunit RuvA from Helicobacter acinonychis (strain Sheeba).